The sequence spans 353 residues: BLOC-1-related complex subunit 6 (353 aa).

The tract at residues 23–194 (AIFGDGPGQT…SGAGGGRRAT (172 aa)) is disordered. The segment covering 102 to 126 (FDLHGSSRRKDPEPPEAKPESERVC) has biased composition (basic and acidic residues). Phosphoserine occurs at positions 130 and 166. Gly residues predominate over residues 172-191 (GACGGPASSGGAESGAGGGR). Residue T194 is modified to Phosphothreonine. S197 bears the Phosphoserine mark. A disordered region spans residues 225–253 (LSGAPQPPPPAPTRPCSAPTPTPAIPPID). The span at 229–253 (PQPPPPAPTRPCSAPTPTPAIPPID) shows a compositional bias: pro residues.

It belongs to the BORCS6 family. As to quaternary structure, component of the BLOC-one-related complex (BORC) which is composed of BLOC1S1, BLOC1S2, BORCS5, BORCS6, BORCS7, BORCS8, KXD1 and SNAPIN.

It localises to the lysosome membrane. As part of the BORC complex may play a role in lysosomes movement and localization at the cell periphery. Associated with the cytosolic face of lysosomes, the BORC complex may recruit ARL8B and couple lysosomes to microtubule plus-end-directed kinesin motor. This Bos taurus (Bovine) protein is BLOC-1-related complex subunit 6.